Consider the following 204-residue polypeptide: Methyl-CpG-binding domain protein 3-like 2B (204 aa).

Basic and acidic residues predominate over residues 126 to 137 (SLDRAGAERVRS). Residues 126-145 (SLDRAGAERVRSPLEPTPGR) form a disordered region.

The protein belongs to the MBD3L family.

This Homo sapiens (Human) protein is Methyl-CpG-binding domain protein 3-like 2B.